We begin with the raw amino-acid sequence, 422 residues long: Phosphoribosylamine--glycine ligase (422 aa).

Residues 107 to 313 enclose the ATP-grasp domain; the sequence is KDLMKKYDIP…LVQVLLDLLD (207 aa). 133–194 provides a ligand contact to ATP; it reads VQEKGAPIVI…EEYLSGEEFS (62 aa). Residues E283 and N285 each coordinate Mg(2+).

The protein belongs to the GARS family. Mg(2+) is required as a cofactor. It depends on Mn(2+) as a cofactor.

The catalysed reaction is 5-phospho-beta-D-ribosylamine + glycine + ATP = N(1)-(5-phospho-beta-D-ribosyl)glycinamide + ADP + phosphate + H(+). It functions in the pathway purine metabolism; IMP biosynthesis via de novo pathway; N(1)-(5-phospho-D-ribosyl)glycinamide from 5-phospho-alpha-D-ribose 1-diphosphate: step 2/2. In Bacillus subtilis (strain 168), this protein is Phosphoribosylamine--glycine ligase.